A 296-amino-acid chain; its full sequence is Homoserine kinase (296 aa).

92–102 (PQSRGLGSSAA) contacts ATP.

It belongs to the GHMP kinase family. Homoserine kinase subfamily.

It is found in the cytoplasm. The catalysed reaction is L-homoserine + ATP = O-phospho-L-homoserine + ADP + H(+). Its pathway is amino-acid biosynthesis; L-threonine biosynthesis; L-threonine from L-aspartate: step 4/5. Functionally, catalyzes the ATP-dependent phosphorylation of L-homoserine to L-homoserine phosphate. The sequence is that of Homoserine kinase from Cutibacterium acnes (strain DSM 16379 / KPA171202) (Propionibacterium acnes).